A 185-amino-acid polypeptide reads, in one-letter code: Ribosome-recycling factor (185 aa).

Belongs to the RRF family.

The protein localises to the cytoplasm. In terms of biological role, responsible for the release of ribosomes from messenger RNA at the termination of protein biosynthesis. May increase the efficiency of translation by recycling ribosomes from one round of translation to another. The sequence is that of Ribosome-recycling factor from Streptococcus gordonii (strain Challis / ATCC 35105 / BCRC 15272 / CH1 / DL1 / V288).